Consider the following 328-residue polypeptide: MSEKIYEYKDENNWFIGKMTGHNLISGWGVKHRTIKKIDDLLDGIAATLDWENPKGYDVSVVRYQSPLSLITFIIDMINQETQREIKVIPHAGTILLMENAKLLAVYLPEGGVSTATFFATSEQGFGDTILIATRNEGKTKEFRNLFGQLGYRVENLNDYPELPEVAETGTTFEENARLKAETISHLTGKMVLADDSGLKVDALGDLPGVWSARFSGPDATDAKNNAKLLHELAMVFDQKKRSAQFHTTLVVAAPNKDSLVVEAEWPGYIATQPKGENGFGYDPVFIVGETGRHAAELEADQKNQLSHRGQAVRKLMEVFPAWQAKQS.

The interval 1 to 129 is unknown; that stretch reads MSEKIYEYKD…ATSEQGFGDT (129 aa). The interval 130–324 is NTP pyrophosphatase; it reads ILIATRNEGK…KLMEVFPAWQ (195 aa). 134–139 serves as a coordination point for substrate; it reads TRNEGK. Catalysis depends on D196, which acts as the Proton acceptor. D196 provides a ligand contact to Mg(2+). Substrate is bound by residues S197, 280–283, K303, and 308–309; these read FGYD and HR.

Belongs to the HAM1 NTPase family. Homodimer. Requires Mg(2+) as cofactor.

It catalyses the reaction XTP + H2O = XMP + diphosphate + H(+). It carries out the reaction dITP + H2O = dIMP + diphosphate + H(+). The enzyme catalyses ITP + H2O = IMP + diphosphate + H(+). Functionally, pyrophosphatase that catalyzes the hydrolysis of nucleoside triphosphates to their monophosphate derivatives, with a high preference for the non-canonical purine nucleotides XTP (xanthosine triphosphate), dITP (deoxyinosine triphosphate) and ITP. Seems to function as a house-cleaning enzyme that removes non-canonical purine nucleotides from the nucleotide pool, thus preventing their incorporation into DNA/RNA and avoiding chromosomal lesions. This is dITP/XTP pyrophosphatase from Streptococcus pyogenes serotype M6 (strain ATCC BAA-946 / MGAS10394).